A 57-amino-acid chain; its full sequence is Large ribosomal subunit protein bL32 (57 aa).

The protein belongs to the bacterial ribosomal protein bL32 family.

The polypeptide is Large ribosomal subunit protein bL32 (Bacillus anthracis (strain A0248)).